A 449-amino-acid chain; its full sequence is Biotin carboxylase (449 aa).

Residues 1 to 445 (MLDKIVIANR…NIHYLEKKLG (445 aa)) form the Biotin carboxylation domain. Residues Lys-116, Lys-159, 165 to 166 (GG), 201 to 204 (EKYL), His-209, and His-236 each bind ATP. The 198-residue stretch at 120 to 317 (IAAMKKAGVP…LIKEQLRIAA (198 aa)) folds into the ATP-grasp domain. Lys-238 lines the hydrogencarbonate pocket. Glu-276 and Glu-288 together coordinate ATP. Mg(2+)-binding residues include Glu-276, Glu-288, and Asn-290. Positions 276, 288, and 290 each coordinate Mn(2+). Positions 292, 295, and 338 each coordinate hydrogencarbonate. Arg-292 is a catalytic residue. Arg-338 serves as a coordination point for biotin.

In terms of assembly, acetyl-CoA carboxylase is a heterohexamer of biotin carboxyl carrier protein, biotin carboxylase and the two subunits of carboxyl transferase in a 2:2 complex. Requires Mg(2+) as cofactor. The cofactor is Mn(2+).

It carries out the reaction N(6)-biotinyl-L-lysyl-[protein] + hydrogencarbonate + ATP = N(6)-carboxybiotinyl-L-lysyl-[protein] + ADP + phosphate + H(+). The protein operates within lipid metabolism; malonyl-CoA biosynthesis; malonyl-CoA from acetyl-CoA: step 1/1. This protein is a component of the acetyl coenzyme A carboxylase complex; first, biotin carboxylase catalyzes the carboxylation of the carrier protein and then the transcarboxylase transfers the carboxyl group to form malonyl-CoA. The protein is Biotin carboxylase (accC) of Escherichia coli (strain K12).